The sequence spans 316 residues: Cell surface superoxide dismutase [Cu-Zn] 6 (316 aa).

Residues 1–18 form the signal peptide; that stretch reads MIFIPIIILIYLVSIAAS. Positions 78, 80, and 96 each coordinate Cu cation. His-96 and Asp-119 together coordinate Zn(2+). Asn-128 carries N-linked (GlcNAc...) asparagine glycosylation. His-159 contributes to the Cu cation binding site. N-linked (GlcNAc...) asparagine glycans are attached at residues Asn-162 and Asn-240. A disordered region spans residues 243–263; it reads DNVYSPEETRPSDQNKKSHRH. Positions 249–258 are enriched in basic and acidic residues; sequence EETRPSDQNK. N-linked (GlcNAc...) asparagine glycans are attached at residues Asn-278 and Asn-281. Ser-288 carries the GPI-anchor amidated serine lipid modification. The propeptide at 289-316 is removed in mature form; the sequence is SDCLNDGMMVTGSVFGSLVLGIAAGIFV.

It belongs to the Cu-Zn superoxide dismutase family. Cu cation is required as a cofactor. The cofactor is Zn(2+). In terms of processing, the GPI-anchor is attached to the protein in the endoplasmic reticulum and serves to target the protein to the cell surface. There, the glucosamine-inositol phospholipid moiety is cleaved off and the GPI-modified mannoprotein is covalently attached via its lipidless GPI glycan remnant to the 1,6-beta-glucan of the outer cell wall layer.

Its subcellular location is the secreted. It localises to the cell wall. The protein resides in the membrane. It catalyses the reaction 2 superoxide + 2 H(+) = H2O2 + O2. Its function is as follows. Superoxide dismutases serve to convert damaging superoxide radicals, a key form of ROS, to less damaging hydrogen peroxide that can be converted into water by catalase action. May be involved protection against extracellular stress. This is Cell surface superoxide dismutase [Cu-Zn] 6 (SOD6) from Candida albicans (strain SC5314 / ATCC MYA-2876) (Yeast).